A 232-amino-acid chain; its full sequence is DNA repair protein RecO (232 aa).

It belongs to the RecO family.

Functionally, involved in DNA repair and RecF pathway recombination. This is DNA repair protein RecO from Francisella tularensis subsp. novicida (strain U112).